The following is a 215-amino-acid chain: Ras-related protein SEC4 (215 aa).

Position 27–34 (27–34 (GDSGVGKS)) interacts with GTP. Positions 49–57 (FITTIGIDF) match the Effector region motif. GTP is bound by residues 75 to 79 (DTAGQ) and 133 to 136 (NKSD). Residues serine 201 and serine 204 each carry the phosphoserine modification. S-geranylgeranyl cysteine attachment occurs at residues cysteine 214 and cysteine 215.

This sequence belongs to the small GTPase superfamily. Rab family. Interacts with the guanyl-nucleotide exchange factor SEC2. Interacts with SRO7, YIF1, YIP3, YIP4 and YIP5.

It localises to the cytoplasmic vesicle. It is found in the secretory vesicle membrane. The protein resides in the cell membrane. The protein localises to the cytoplasm. Functionally, involved in exocytosis. Maybe by regulating the binding and fusion of secretory vesicles with the cell surface. The GTP-bound form of SEC4 may interact with an effector, thereby stimulating its activity and leading to exocytotic fusion. SEC4 may be an upstream activator of the 19.5S SEC8/SEC15 particle. SEC4 probably interacts directly with SEC8; it could serve as the attachment site for the SEC8/SEC15 particle. This Saccharomyces cerevisiae (strain ATCC 204508 / S288c) (Baker's yeast) protein is Ras-related protein SEC4 (SEC4).